A 148-amino-acid chain; its full sequence is Deoxyuridine 5'-triphosphate nucleotidohydrolase (148 aa).

Substrate-binding positions include 68–70 (RSG), asparagine 81, 85–87 (TID), and lysine 95.

It belongs to the dUTPase family. Requires Mg(2+) as cofactor.

It carries out the reaction dUTP + H2O = dUMP + diphosphate + H(+). It participates in pyrimidine metabolism; dUMP biosynthesis; dUMP from dCTP (dUTP route): step 2/2. In terms of biological role, this enzyme is involved in nucleotide metabolism: it produces dUMP, the immediate precursor of thymidine nucleotides and it decreases the intracellular concentration of dUTP so that uracil cannot be incorporated into DNA. The protein is Deoxyuridine 5'-triphosphate nucleotidohydrolase of Rickettsia peacockii (strain Rustic).